A 252-amino-acid polypeptide reads, in one-letter code: ELH type 2 (252 aa).

Positions 1–19 are cleaved as a signal peptide; it reads AISLLMCLILSALCASSES. 3 consecutive propeptides follow at residues 20 to 75, 92 to 130, and 144 to 185; these read AVVH…VNNE, PQEV…QREL, and AAGD…SGIA. The span at 145-161 shows a compositional bias: basic and acidic residues; sequence AGDEDKAEEHNPETESH. The interval 145-171 is disordered; sequence AGDEDKAEEHNPETESHSRRKRSALTP. At Lys-222 the chain carries Lysine amide.

The protein belongs to the molluscan ELH family. Bag cell neurons.

The protein localises to the secreted. In terms of biological role, ELH acts as a neurotransmitter locally, upon neurons of the abdominal ganglion and as a hormone by diffusing into the circulating hemolymph and modulating the activity of other organs. It specifically causes contraction of smooth muscle in the ovotestis and expulsion of the egg string. Alpha-BCP decreases the activity of a cluster of neurons in the left upper quadrant of the abdominal ganglion. Its function is as follows. Beta-BCP specifically excites 2 neurons, L1 and R1, in the abdominal ganglion. In Aplysia parvula (Dwarf sea hare), this protein is ELH type 2 (ELH2).